The following is a 51-amino-acid chain: uncharacterized protein (51 aa).

It to E.coli YdfA.

This is an uncharacterized protein from Escherichia coli O157:H7.